A 1515-amino-acid polypeptide reads, in one-letter code: Homeobox protein cut-like 1 (1515 aa).

Residues 56 to 361 (LLKSFQGEID…VKKELNTLKS (306 aa)) are a coiled coil. Positions 393–405 (ENATLRISNSDLS) are enriched in polar residues. Disordered regions lie at residues 393-453 (ENAT…SPAG), 509-546 (PYST…ISEG), 644-666 (PKRR…TGSD), and 680-702 (LQVQ…NSDD). The segment covering 422–432 (GPLPASPPPQL) has biased composition (pro residues). Phosphoserine is present on S427. Polar residues predominate over residues 436-447 (TGEQVSNTNGTH). The segment covering 514–544 (SISSPSPLQQSPDVNGMAPSPSQSESAGSIS) has biased composition (low complexity). Positions 540–627 (AGSISEGEEI…ILALRSIQGR (88 aa)) form a DNA-binding region, CUT 1. S761 is subject to Phosphoserine. Disordered regions lie at residues 769–871 (PETS…SASA) and 884–923 (YSQS…PSVP). Glycyl lysine isopeptide (Lys-Gly) (interchain with G-Cter in SUMO2) cross-links involve residues K783, K809, and K840. Residues 828–852 (PERRNLTSSEETKADETTASGKERA) are compositionally biased toward basic and acidic residues. Polar residues-rich tracts occupy residues 853-868 (GSSQ…QGPS) and 884-906 (YSQS…NSPL). Residue S904 is modified to Phosphoserine. A DNA-binding region (CUT 2) is located at residues 929-1016 (QYEVYMYQEV…QGVLPVQGQQ (88 aa)). A compositionally biased stretch (polar residues) spans 1032 to 1044 (QQGCVSSESTPKT). Residues 1032–1105 (QQGCVSSEST…QPTTPLPLSG (74 aa)) form a disordered region. Low complexity predominate over residues 1045–1061 (SASCSPAPESPMSSSES). S1054 and S1064 each carry phosphoserine. The CUT 3 DNA-binding region spans 1112 to 1199 (QELVAMSPEL…VEKLMDMKRM (88 aa)). Positions 1207–1242 (RRHSSVSDSQPCEPPSVGIDYSQGASPQPQHQLKKP) are disordered. The segment at residues 1239–1298 (LKKPRVVLAPEEKEALKRAYQQKPYPSPKTIEELATQLNLKTSTVINWFHNYRSRIRREL) is a DNA-binding region (homeobox). S1265 bears the Phosphoserine mark. K1279 participates in a covalent cross-link: Glycyl lysine isopeptide (Lys-Gly) (interchain with G-Cter in SUMO2). A disordered region spans residues 1307 to 1488 (SQGQAGASDS…AGARDNPVRK (182 aa)). The segment covering 1313 to 1328 (ASDSPSARSSRAAPSS) has biased composition (low complexity). Residues 1331–1343 (DSCDGVEATDAEE) are compositionally biased toward acidic residues. The residue at position 1332 (S1332) is a Phosphoserine. Basic and acidic residues predominate over residues 1365-1378 (ADREEATQPAEKAK). Residues 1406–1468 (ADAPAPVPSL…ANAPARRPSS (63 aa)) show a composition bias toward low complexity. S1468, S1496, and S1506 each carry phosphoserine.

It belongs to the CUT homeobox family. Interacts with BANP. Interacts with SATB1 (via DNA-binding domains); the interaction inhibits the attachment of both proteins to DNA. Post-translationally, phosphorylated by PKA. In terms of processing, as cells progress into S phase, a fraction of CUX1 molecules is proteolytically processed into N-terminally truncated proteins of 110 kDa by CTSL. Cell cycle-dependent processing of CUX1 serves to generate a CDP/Cux p110 with distinct DNA binding and transcriptional properties. As to expression, testis-specific where it is expressed in germ cells.

The protein localises to the nucleus. Its function is as follows. Transcription factor involved in the control of neuronal differentiation in the brain. Regulates dendrite development and branching, and dendritic spine formation in cortical layers II-III. Also involved in the control of synaptogenesis. In addition, it has probably a broad role in mammalian development as a repressor of developmentally regulated gene expression. May act by preventing binding of positively-activing CCAAT factors to promoters. Component of nf-munr repressor; binds to the matrix attachment regions (MARs) (5' and 3') of the immunoglobulin heavy chain enhancer. Represses T-cell receptor (TCR) beta enhancer function by binding to MARbeta, an ATC-rich DNA sequence located upstream of the TCR beta enhancer. Binds to the TH enhancer; may require the basic helix-loop-helix protein TCF4 as a coactivator. In terms of biological role, plays a role in cell cycle progression, in particular at the G1/S transition. As cells progress into S phase, a fraction of CUX1 molecules is proteolytically processed into N-terminally truncated proteins of 110 kDa. While CUX1 only transiently binds to DNA and carries the CCAAT-displacement activity, CDP/Cux p110 makes a stable interaction with DNA and stimulates expression of genes such as POLA1. The protein is Homeobox protein cut-like 1 of Mus musculus (Mouse).